A 169-amino-acid chain; its full sequence is S-ribosylhomocysteine lyase (169 aa).

Fe cation is bound by residues histidine 54, histidine 58, and cysteine 128.

Belongs to the LuxS family. In terms of assembly, homodimer. Fe cation is required as a cofactor.

It carries out the reaction S-(5-deoxy-D-ribos-5-yl)-L-homocysteine = (S)-4,5-dihydroxypentane-2,3-dione + L-homocysteine. Involved in the synthesis of autoinducer 2 (AI-2) which is secreted by bacteria and is used to communicate both the cell density and the metabolic potential of the environment. The regulation of gene expression in response to changes in cell density is called quorum sensing. Catalyzes the transformation of S-ribosylhomocysteine (RHC) to homocysteine (HC) and 4,5-dihydroxy-2,3-pentadione (DPD). This Shewanella woodyi (strain ATCC 51908 / MS32) protein is S-ribosylhomocysteine lyase.